The following is a 277-amino-acid chain: MAWLEGQSVFLTGGVAGLGRALVKRLVEEGANVTVLDRNARGLDELVESFKGRVAGSPGDVRNLADNRKAVELAVERFGKLDTFNRQRRHLGLLCPPCRPAGRCHQRSFDEVIGINLMGYVMGIKAAAPALVRSRGSVILTLSSSAFYAGGGGVLYTVAKHAAVGLIKQAAHELAPYVRVNGVAPGGIASDLRGPKSLGMGEQSITSVPLADLVKDIAPIGRLSDTEEYTGSYVYLASARNSAPATGVIINCDGGMGVRSVLGPASGGKGLLEKFGG.

NAD(+) contacts are provided by residues 10-37 (FLTG…TVLD) and Asp-60. Ser-143 is a binding site for substrate. Catalysis depends on Tyr-156, which acts as the Proton acceptor. Lys-160 contributes to the NAD(+) binding site.

The protein belongs to the short-chain dehydrogenases/reductases (SDR) family. In terms of assembly, homotetramer.

It carries out the reaction (3S,4R)-3,4-dihydrophenanthrene-3,4-diol + NAD(+) = phenanthrene-3,4-diol + NADH + H(+). Its activity is regulated as follows. Inhibited by heavy metal such as Hg(2+) and by p-chloromercuribenzoate. In terms of biological role, involved in the degradation of phenanthrene. Catalyzes the oxidation of cis-phenanthrene dihydrodiol (PDD) to yield phenanthrenediol. It can use either NAD or NADP as electron acceptor, however NAD is preferred to NADP. This Alcaligenes faecalis protein is Cis-3,4-dihydrophenanthrene-3,4-diol dehydrogenase (phnB).